The chain runs to 323 residues: uncharacterized protein (323 aa).

A helical transmembrane segment spans residues 4–24; the sequence is IIFAFIILFVFLLPMIIFYQP.

Its subcellular location is the membrane. This is an uncharacterized protein from Escherichia coli (strain K12).